The chain runs to 507 residues: MTDDPGSGFTTVWNAVVSELNGDPKVDDGPSSDANLSAPLTPQQRAWLNLVQPLTIVEGFALLSVPSSFVQNEIERHLRAPITDALSRRLGHQIQLGVRIAPPATDEADDTTVPPSENPATTSPDTTTDNDEIDDSAAARGDNQHSWPSYFTERPHNTDSATAGVTSLNRRYTFDTFVIGASNRFAHAAALAIAEAPARAYNPLFIWGESGLGKTHLLHAAGNYAQRLFPGMRVKYVSTEEFTNDFINSLRDDRKVAFKRSYRDVDVLLVDDIQFIEGKEGIQEEFFHTFNTLHNANKQIVISSDRPPKQLATLEDRLRTRFEWGLITDVQPPELETRIAILRKKAQMERLAVPDDVLELIASSIERNIRELEGALIRVTAFASLNKTPIDKALAEIVLRDLIADANTMQISAATIMAATAEYFDTTVEELRGPGKTRALAQSRQIAMYLCRELTDLSLPKIGQAFGRDHTTVMYAQRKILSEMAERREVFDHVKELTTRIRQRSKR.

The domain I, interacts with DnaA modulators stretch occupies residues 1–112 (MTDDPGSGFT…PATDEADDTT (112 aa)). Positions 99–155 (RIAPPATDEADDTTVPPSENPATTSPDTTTDNDEIDDSAAARGDNQHSWPSYFTERP) are disordered. The span at 113–127 (VPPSENPATTSPDTT) shows a compositional bias: polar residues. Residues 113-166 (VPPSENPATTSPDTTTDNDEIDDSAAARGDNQHSWPSYFTERPHNTDSATAGVT) form a domain II region. Residues 167–383 (SLNRRYTFDT…GALIRVTAFA (217 aa)) are domain III, AAA+ region. Positions 211, 213, 214, and 215 each coordinate ATP. The interval 384 to 507 (SLNKTPIDKA…TTRIRQRSKR (124 aa)) is domain IV, binds dsDNA.

The protein belongs to the DnaA family. Oligomerizes as a right-handed, spiral filament on DNA at oriC.

It localises to the cytoplasm. Its function is as follows. Plays an essential role in the initiation and regulation of chromosomal replication. ATP-DnaA binds to the origin of replication (oriC) to initiate formation of the DNA replication initiation complex once per cell cycle. Binds the DnaA box (a 9 base pair repeat at the origin) and separates the double-stranded (ds)DNA. Forms a right-handed helical filament on oriC DNA; dsDNA binds to the exterior of the filament while single-stranded (ss)DNA is stabiized in the filament's interior. The ATP-DnaA-oriC complex binds and stabilizes one strand of the AT-rich DNA unwinding element (DUE), permitting loading of DNA polymerase. After initiation quickly degrades to an ADP-DnaA complex that is not apt for DNA replication. Binds acidic phospholipids. This Mycobacterium tuberculosis (strain ATCC 25177 / H37Ra) protein is Chromosomal replication initiator protein DnaA.